Consider the following 148-residue polypeptide: Deoxyuridine 5'-triphosphate nucleotidohydrolase (148 aa).

Residues Arg67–Gly69, Asn80, Thr84–Asp86, and Lys94 each bind substrate.

The protein belongs to the dUTPase family. The cofactor is Mg(2+).

The catalysed reaction is dUTP + H2O = dUMP + diphosphate + H(+). Its pathway is pyrimidine metabolism; dUMP biosynthesis; dUMP from dCTP (dUTP route): step 2/2. Its function is as follows. This enzyme is involved in nucleotide metabolism: it produces dUMP, the immediate precursor of thymidine nucleotides and it decreases the intracellular concentration of dUTP so that uracil cannot be incorporated into DNA. The sequence is that of Deoxyuridine 5'-triphosphate nucleotidohydrolase from Orientia tsutsugamushi (strain Ikeda) (Rickettsia tsutsugamushi).